The sequence spans 391 residues: Erythronate-4-phosphate dehydrogenase (391 aa).

S45 and T67 together coordinate substrate. D147 and T176 together coordinate NAD(+). The active site involves R209. D238 contacts NAD(+). E243 is a catalytic residue. The active-site Proton donor is H260. G263 is a binding site for NAD(+). Substrate is bound at residue Y264.

Belongs to the D-isomer specific 2-hydroxyacid dehydrogenase family. PdxB subfamily. As to quaternary structure, homodimer.

It localises to the cytoplasm. It carries out the reaction 4-phospho-D-erythronate + NAD(+) = (R)-3-hydroxy-2-oxo-4-phosphooxybutanoate + NADH + H(+). It participates in cofactor biosynthesis; pyridoxine 5'-phosphate biosynthesis; pyridoxine 5'-phosphate from D-erythrose 4-phosphate: step 2/5. In terms of biological role, catalyzes the oxidation of erythronate-4-phosphate to 3-hydroxy-2-oxo-4-phosphonooxybutanoate. The polypeptide is Erythronate-4-phosphate dehydrogenase (Photobacterium profundum (strain SS9)).